A 188-amino-acid chain; its full sequence is Ribosome maturation factor RimM (188 aa).

The region spanning 112-187 is the PRC barrel domain; that stretch reads SDSYYWVDLI…LLTLDWQSDW (76 aa).

This sequence belongs to the RimM family. In terms of assembly, binds ribosomal protein uS19.

It is found in the cytoplasm. Its function is as follows. An accessory protein needed during the final step in the assembly of 30S ribosomal subunit, possibly for assembly of the head region. Essential for efficient processing of 16S rRNA. May be needed both before and after RbfA during the maturation of 16S rRNA. It has affinity for free ribosomal 30S subunits but not for 70S ribosomes. The chain is Ribosome maturation factor RimM from Polynucleobacter asymbioticus (strain DSM 18221 / CIP 109841 / QLW-P1DMWA-1) (Polynucleobacter necessarius subsp. asymbioticus).